Consider the following 424-residue polypeptide: Serine--tRNA ligase (424 aa).

Residue 233-235 (TAE) participates in L-serine binding. 264-266 (RRE) is a binding site for ATP. Glutamate 287 contacts L-serine. Residue 351 to 354 (EISS) participates in ATP binding. Serine 387 contacts L-serine.

This sequence belongs to the class-II aminoacyl-tRNA synthetase family. Type-1 seryl-tRNA synthetase subfamily. Homodimer. The tRNA molecule binds across the dimer.

It localises to the cytoplasm. It catalyses the reaction tRNA(Ser) + L-serine + ATP = L-seryl-tRNA(Ser) + AMP + diphosphate + H(+). It carries out the reaction tRNA(Sec) + L-serine + ATP = L-seryl-tRNA(Sec) + AMP + diphosphate + H(+). It participates in aminoacyl-tRNA biosynthesis; selenocysteinyl-tRNA(Sec) biosynthesis; L-seryl-tRNA(Sec) from L-serine and tRNA(Sec): step 1/1. Its function is as follows. Catalyzes the attachment of serine to tRNA(Ser). Is also able to aminoacylate tRNA(Sec) with serine, to form the misacylated tRNA L-seryl-tRNA(Sec), which will be further converted into selenocysteinyl-tRNA(Sec). The polypeptide is Serine--tRNA ligase (Acaryochloris marina (strain MBIC 11017)).